A 242-amino-acid chain; its full sequence is N-alpha-acetyltransferase 60 (242 aa).

Residues 1–192 (MTEAVPSSAL…GGHPPWTILD (192 aa)) are Cytoplasmic-facing. One can recognise an N-acetyltransferase domain in the interval 13–182 (VSLRLLCHDD…DGFTYVLYIN (170 aa)). Tyr-38 is a substrate binding site. Lys-79 is subject to N6-acetyllysine; by autocatalysis. Tyr-97 is a catalytic residue. A substrate-binding site is contributed by Leu-99. 101–103 (LGV) contacts acetyl-CoA. An N6-acetyllysine; by autocatalysis mark is found at Lys-105, Lys-109, and Lys-121. 109 to 114 (KHGIGS) is a binding site for acetyl-CoA. His-138 is a catalytic residue. Residues Asn-143 and 150–153 (YENR) contribute to the acetyl-CoA site. Lys-156 carries the post-translational modification N6-acetyllysine; by autocatalysis. The tract at residues 162–173 (PYYYSIRGVLKD) is required for homodimerization. Tyr-165 provides a ligand contact to substrate. Residues 193–236 (YIQHLGSALANLSPCSIPHRIYRQAQSLLCSFLPWSSISTKGGI) constitute an intramembrane region (helical). Residues 237–242 (EYSRTM) lie on the Cytoplasmic side of the membrane.

Belongs to the acetyltransferase family. NAA60 subfamily. Monomer and homodimer; monomer in presence of substrate and homodimer in its absence. Acetylated: autoacetylation is required for optimal acetyltransferase activity.

The protein resides in the golgi apparatus membrane. The catalysed reaction is N-terminal L-methionyl-[transmembrane protein] + acetyl-CoA = N-terminal N(alpha)-acetyl-L-methionyl-[transmembrane protein] + CoA + H(+). It carries out the reaction L-lysyl-[protein] + acetyl-CoA = N(6)-acetyl-L-lysyl-[protein] + CoA + H(+). N-alpha-acetyltransferase that specifically mediates the acetylation of N-terminal residues of the transmembrane proteins, with a strong preference for N-termini facing the cytosol. Displays N-terminal acetyltransferase activity towards a range of N-terminal sequences including those starting with Met-Lys, Met-Val, Met-Ala and Met-Met. Required for normal chromosomal segregation during anaphase. May also show histone acetyltransferase activity; such results are however unclear in vivo and would require additional experimental evidences. The sequence is that of N-alpha-acetyltransferase 60 (NAA60) from Bos taurus (Bovine).